We begin with the raw amino-acid sequence, 191 residues long: Orotate phosphoribosyltransferase (191 aa).

Residue 116-124 participates in 5-phospho-alpha-D-ribose 1-diphosphate binding; sequence EDVVTTGGS. Orotate-binding residues include T120 and R148.

The protein belongs to the purine/pyrimidine phosphoribosyltransferase family. PyrE subfamily. Homodimer. Requires Mg(2+) as cofactor.

It carries out the reaction orotidine 5'-phosphate + diphosphate = orotate + 5-phospho-alpha-D-ribose 1-diphosphate. Its pathway is pyrimidine metabolism; UMP biosynthesis via de novo pathway; UMP from orotate: step 1/2. Catalyzes the transfer of a ribosyl phosphate group from 5-phosphoribose 1-diphosphate to orotate, leading to the formation of orotidine monophosphate (OMP). The polypeptide is Orotate phosphoribosyltransferase (Heliobacterium modesticaldum (strain ATCC 51547 / Ice1)).